The sequence spans 671 residues: DNA ligase (671 aa).

Residues Asp32–Asp36, Ser81–Leu82, and Glu113 each bind NAD(+). The active-site N6-AMP-lysine intermediate is the Lys115. The NAD(+) site is built by Arg136, Glu173, Lys290, and Lys314. The Zn(2+) site is built by Cys408, Cys411, Cys426, and Cys432. One can recognise a BRCT domain in the interval Glu593–Ser671.

The protein belongs to the NAD-dependent DNA ligase family. LigA subfamily. Requires Mg(2+) as cofactor. It depends on Mn(2+) as a cofactor.

It catalyses the reaction NAD(+) + (deoxyribonucleotide)n-3'-hydroxyl + 5'-phospho-(deoxyribonucleotide)m = (deoxyribonucleotide)n+m + AMP + beta-nicotinamide D-nucleotide.. In terms of biological role, DNA ligase that catalyzes the formation of phosphodiester linkages between 5'-phosphoryl and 3'-hydroxyl groups in double-stranded DNA using NAD as a coenzyme and as the energy source for the reaction. It is essential for DNA replication and repair of damaged DNA. The sequence is that of DNA ligase from Escherichia coli O127:H6 (strain E2348/69 / EPEC).